The chain runs to 532 residues: 4-amino-L-phenylalanyl-[CmlP-peptidyl-carrier-protein] 3-hydroxylase (532 aa).

Fe cation is bound by residues His305, His307, Asp309, His310, Glu377, and Asp403.

Belongs to the metallo-beta-lactamase superfamily. Homodimer. The cofactor is Fe(2+).

The enzyme catalyses 4-amino-L-phenylalanyl-[peptidyl-carrier protein] + AH2 + O2 = (2R)-2-(4-aminophenyl)-L-seryl-[peptidyl-carrier protein] + A + H2O. The protein operates within antibiotic biosynthesis. Its function is as follows. Involved in chloramphenicol biosynthesis. Catalyzes the beta-hydroxylation of 4-amino-L-phenylalanine (L-PAPA) covalently bound to CmlP to form L-p-aminophenylserine. The protein is 4-amino-L-phenylalanyl-[CmlP-peptidyl-carrier-protein] 3-hydroxylase of Streptomyces venezuelae (strain ATCC 10712 / CBS 650.69 / DSM 40230 / JCM 4526 / NBRC 13096 / PD 04745).